We begin with the raw amino-acid sequence, 457 residues long: Argininosuccinate lyase (457 aa).

Belongs to the lyase 1 family. Argininosuccinate lyase subfamily.

The protein localises to the cytoplasm. The catalysed reaction is 2-(N(omega)-L-arginino)succinate = fumarate + L-arginine. It participates in amino-acid biosynthesis; L-arginine biosynthesis; L-arginine from L-ornithine and carbamoyl phosphate: step 3/3. The protein is Argininosuccinate lyase of Klebsiella pneumoniae (strain 342).